The following is a 93-amino-acid chain: Ubiquinol-cytochrome-c reductase complex assembly factor 3 (93 aa).

Topologically, residues 1–7 (MDSLRKM) are mitochondrial matrix. A helical membrane pass occupies residues 8-28 (LISVAMLGAGAGVGYALLVIV). Positions 23–80 (ALLVIVTPGERRKQEMLKEMPLQDPRSREEAARTQQLLLATLQEAATTQENVAWRKNW) are mediates lipid-binding. The Mitochondrial intermembrane segment spans residues 29 to 93 (TPGERRKQEM…GEGGAGGRSP (65 aa)).

It belongs to the UQCC3 family. In terms of assembly, associates with the ubiquinol-cytochrome c reductase complex (mitochondrial respiratory chain complex III or cytochrome b-c1 complex). Interacts with UQCC1. Forms a complex, named COMC, composed of UQCC1, UQCC2; UQCC3 and UQCC4; mediates MT-CYB hemylation and association with the first nuclear-encoded complex III subunit UQCRQ. Probably cleaved by OMA1 under mitochondrial stress conditions.

It localises to the mitochondrion inner membrane. In terms of biological role, required for the assembly of the ubiquinol-cytochrome c reductase complex (mitochondrial respiratory chain complex III or cytochrome b-c1 complex), mediating cytochrome b recruitment and probably stabilization within the complex. Thereby, plays an important role in ATP production by mitochondria. Cardiolipin-binding protein, it may also control the cardiolipin composition of mitochondria membranes and their morphology. This is Ubiquinol-cytochrome-c reductase complex assembly factor 3 from Homo sapiens (Human).